Reading from the N-terminus, the 110-residue chain is NADH dehydrogenase [ubiquinone] iron-sulfur protein 6, mitochondrial (110 aa).

Residues 1-22 (MASNLLKALIRSQILPSSRRNF) constitute a mitochondrion transit peptide.

It belongs to the complex I NDUFS6 subunit family. In terms of assembly, complex I is composed of at least 49 different subunits. This is a component of the iron-sulfur (IP) fragment of the enzyme.

The protein localises to the mitochondrion inner membrane. Its function is as follows. Accessory subunit of the mitochondrial membrane respiratory chain NADH dehydrogenase (Complex I), that is believed not to be involved in catalysis. Complex I functions in the transfer of electrons from NADH to the respiratory chain. The immediate electron acceptor for the enzyme is believed to be ubiquinone. The chain is NADH dehydrogenase [ubiquinone] iron-sulfur protein 6, mitochondrial from Arabidopsis thaliana (Mouse-ear cress).